A 522-amino-acid polypeptide reads, in one-letter code: Biotin-dependent long chain acyl-coenzyme A carboxylase beta4 subunit (522 aa).

A CoA carboxyltransferase N-terminal domain is found at 11-261; sequence TAEKLAELRE…NCFDKPPVVN (251 aa). A CoA carboxyltransferase C-terminal domain is found at 270 to 503; it reads GHDLELDSIV…RLLLRKSMHL (234 aa).

The protein belongs to the AccD/PCCB family. As to quaternary structure, the biotin-dependent long-chain acyl-CoA carboxylase (LCC) complex is composed of AccA3, which contains the biotin carboxylase (BC) and biotin carboxyl carrier protein (BCCP) domains, and AccD4, which contains the carboxyl transferase (CT) domain. The complex also contains the beta5 subunit AccD5 and the epsilon subunit AccE5. The four subunits are essential for activity, but AccD5, together with AccE5, probably plays a structural role rather than a catalytic one.

In terms of biological role, component of a biotin-dependent acyl-CoA carboxylase complex. This subunit transfers the CO2 from carboxybiotin to the CoA ester substrate. When associated with the alpha3 subunit AccA3, the beta5 subunit AccD5 and the epsilon subunit AccE5, forms the LCC complex, which is involved in the carboxylation of long chain acyl-CoA. The LCC complex can use C16-C24 substrates, the highest specific activity is obtained with carboxy-C20-CoA. Has low activity with acetyl-CoA and propionyl-CoA. This Mycobacterium tuberculosis (strain ATCC 25618 / H37Rv) protein is Biotin-dependent long chain acyl-coenzyme A carboxylase beta4 subunit.